Here is a 1157-residue protein sequence, read N- to C-terminus: MGKLRRRYNIKGRQQAGPGPSKGPPEPPPVQLELEDKDTLKGVDASNALVLPGKKKKKTKAPPLSKKEKKPLTKKEKKVLQKILEQKEKKSQRAEMLQKLSEVQASEAEMRLFYTTSKLGTGNRMYHTKEKADEVVAPGQEKISSLSGAHRKRRRWPSAEEEEEEEEESESELEEESELDEDPAAEPAEAGVGTTVAPLPPAPAPSSQPVPAGMTVPPPPAAAPPLPRALAKPAVFIPVNRSPEMQEERLKLPILSEEQVIMEAVAEHPIVIVCGETGSGKTTQVPQFLYEAGFSSEDSIIGVTEPRRVAAVAMSQRVAKEMNLSQRVVSYQIRYEGNVTEETRIKFMTDGVLLKEIQKDFLLLRYKVVIIDEAHERSVYTDILIGLLSRIVTLRAKRNLPLKLLIMSATLRVEDFTQNPRLFAKPPPVIKVESRQFPVTVHFNKRTPLEDYSGECFRKVCKIHRMLPAGGILVFLTGQAEVHALCRRLRKAFPPSRARPQEKDDDQKDSVEEMRKFKKSRARAKKARAEVLPQINLDHYSVLPAGEGDEDREAEVDEEEGALDSDLDLDLGDGGQDGGEQPDASLPLHVLPLYSLLAPEKQAQVFKPPPEGTRLCVVATNVAETSLTIPGIKYVVDCGKVKKRYYDRVTGVSSFRVTWVSQASADQRAGRAGRTEPGHCYRLYSSAVFGDFEQFPPPEITRRPVEDLILQMKALNVEKVINFPFPTPPSVEALLAAEELLIALGALQPPQKAERVKQLQENRLSCPITALGRTMATFPVAPRYAKMLALSRQHGCLPYAITIVASMTVRELFEELDRPAASDEELTRLKSKRARVAQMKRTWAGQGASLKLGDLMVLLGAVGACEYASCTPQFCEANGLRYKAMMEIRRLRGQLTTAVNAVCPEAELFVDPKMQPPTESQVTYLRQIVTAGLGDHLARRVQSEEMLEDKWRNAYKTPLLDDPVFIHPSSVLFKELPEFVVYQEIVETTKMYMKGVSSVEVQWIPALLPSYCQFDKPLEEPAPTYCPERGRVLCHRASVFYRVGWPLPAIEVDFPEGIDRYKHFARFLLEGQVFRKLASYRSCLLSSPGTMLKTWARLQPRTESLLRALVAEKADCHEALLAAWKKNPKYLLAEYCEWLPQAMHPDIEKAWPPTTVH.

Residues 1–10 show a composition bias toward basic residues; the sequence is MGKLRRRYNI. Disordered regions lie at residues 1 to 77 and 116 to 225; these read MGKL…KKEK and TSKL…AAPP. The segment covering 21–30 has biased composition (pro residues); it reads SKGPPEPPPV. A compositionally biased stretch (acidic residues) spans 159 to 184; it reads AEEEEEEEEESESELEEESELDEDPA. Composition is skewed to pro residues over residues 198–208 and 216–225; these read PLPPAPAPSSQ and VPPPPAAAPP. Positions 262 to 429 constitute a Helicase ATP-binding domain; it reads MEAVAEHPIV…PRLFAKPPPV (168 aa). 275–282 is a binding site for ATP; it reads GETGSGKT. Residues 372 to 375 carry the DEAH box motif; it reads DEAH. In terms of domain architecture, Helicase C-terminal spans 459-716; that stretch reads KVCKIHRMLP…DLILQMKALN (258 aa). 2 disordered regions span residues 494 to 523 and 542 to 584; these read PPSRARPQEKDDDQKDSVEEMRKFKKSRAR and VLPA…QPDA. A compositionally biased stretch (basic and acidic residues) spans 499–515; that stretch reads RPQEKDDDQKDSVEEMR. Residues 547 to 571 are compositionally biased toward acidic residues; that stretch reads EGDEDREAEVDEEEGALDSDLDLDL.

It belongs to the DEAD box helicase family. DEAH subfamily. In terms of assembly, part of the small subunit (SSU) processome, composed of more than 70 proteins and the RNA chaperone small nucleolar RNA (snoRNA) U3. Interacts with UTP14A. Expressed in the fallopian tube, ovary, uterus and testis. Also expressed in the brain.

It localises to the nucleus. It is found in the nucleolus. Its subcellular location is the cytoplasm. The protein localises to the nucleus membrane. It catalyses the reaction ATP + H2O = ADP + phosphate + H(+). ATP-binding RNA helicase that plays a role in maturation of the small ribosomal subunit in ribosome biogenesis. Required for the release of the U3 snoRNP from pre-ribosomal particles. Part of the small subunit (SSU) processome, first precursor of the small eukaryotic ribosomal subunit. During the assembly of the SSU processome in the nucleolus, many ribosome biogenesis factors, an RNA chaperone and ribosomal proteins associate with the nascent pre-rRNA and work in concert to generate RNA folding, modifications, rearrangements and cleavage as well as targeted degradation of pre-ribosomal RNA by the RNA exosome. Plays a role in early testis development. Probably also plays a role in brain development. This Homo sapiens (Human) protein is Probable ATP-dependent RNA helicase DHX37.